The following is a 919-amino-acid chain: UPF0182 protein Tery_4385 (919 aa).

A run of 7 helical transmembrane segments spans residues 6–26 (YIII…RTLV), 52–72 (IFLW…NYWI), 96–116 (IFVK…AATA), 160–180 (WLFT…ALKG), 198–218 (THIS…FWFE), 243–263 (FAYW…VLSV), and 268–288 (IIWP…FNVL).

The protein belongs to the UPF0182 family.

The protein localises to the cell membrane. The sequence is that of UPF0182 protein Tery_4385 from Trichodesmium erythraeum (strain IMS101).